The sequence spans 257 residues: MSLEIVPFVVAIPARFSASRLPGKPLRLLGGRPLIHRVAERALSAGAREVWVATDDVRIAEAVASLDGVHVAMTANTHLSGSDRLAECARIAGWDPEMCVVNLQGDEPFAPAAGIRAVAALLHHSNADMATLATTIDKSEDLFNPNIVKLVCNAHGEALYFSRAPIPWNRDTFATTPEPTPLGPWLRHIGLYACNAGFLQRFTTMQPGTLEQIESLEQLRVLEAGHRIAVRITPEHFPPGIDTPEDLARAEKALEDV.

The protein belongs to the KdsB family.

The protein localises to the cytoplasm. The catalysed reaction is 3-deoxy-alpha-D-manno-oct-2-ulosonate + CTP = CMP-3-deoxy-beta-D-manno-octulosonate + diphosphate. It functions in the pathway nucleotide-sugar biosynthesis; CMP-3-deoxy-D-manno-octulosonate biosynthesis; CMP-3-deoxy-D-manno-octulosonate from 3-deoxy-D-manno-octulosonate and CTP: step 1/1. Its pathway is bacterial outer membrane biogenesis; lipopolysaccharide biosynthesis. Functionally, activates KDO (a required 8-carbon sugar) for incorporation into bacterial lipopolysaccharide in Gram-negative bacteria. This chain is 3-deoxy-manno-octulosonate cytidylyltransferase, found in Xylella fastidiosa (strain 9a5c).